The primary structure comprises 178 residues: Large ribosomal subunit protein uL6 (178 aa).

This sequence belongs to the universal ribosomal protein uL6 family. In terms of assembly, part of the 50S ribosomal subunit.

Functionally, this protein binds to the 23S rRNA, and is important in its secondary structure. It is located near the subunit interface in the base of the L7/L12 stalk, and near the tRNA binding site of the peptidyltransferase center. This is Large ribosomal subunit protein uL6 from Symbiobacterium thermophilum (strain DSM 24528 / JCM 14929 / IAM 14863 / T).